The sequence spans 600 residues: Dihydroxy-acid dehydratase (600 aa).

Aspartate 82 contacts Mg(2+). Cysteine 123 serves as a coordination point for [2Fe-2S] cluster. Residues aspartate 124 and lysine 125 each coordinate Mg(2+). Lysine 125 is modified (N6-carboxylysine). Cysteine 192 contacts [2Fe-2S] cluster. Glutamate 489 is a Mg(2+) binding site. The active-site Proton acceptor is the serine 515.

This sequence belongs to the IlvD/Edd family. In terms of assembly, homodimer. [2Fe-2S] cluster is required as a cofactor. Requires Mg(2+) as cofactor.

It carries out the reaction (2R)-2,3-dihydroxy-3-methylbutanoate = 3-methyl-2-oxobutanoate + H2O. It catalyses the reaction (2R,3R)-2,3-dihydroxy-3-methylpentanoate = (S)-3-methyl-2-oxopentanoate + H2O. It participates in amino-acid biosynthesis; L-isoleucine biosynthesis; L-isoleucine from 2-oxobutanoate: step 3/4. It functions in the pathway amino-acid biosynthesis; L-valine biosynthesis; L-valine from pyruvate: step 3/4. Its function is as follows. Functions in the biosynthesis of branched-chain amino acids. Catalyzes the dehydration of (2R,3R)-2,3-dihydroxy-3-methylpentanoate (2,3-dihydroxy-3-methylvalerate) into 2-oxo-3-methylpentanoate (2-oxo-3-methylvalerate) and of (2R)-2,3-dihydroxy-3-methylbutanoate (2,3-dihydroxyisovalerate) into 2-oxo-3-methylbutanoate (2-oxoisovalerate), the penultimate precursor to L-isoleucine and L-valine, respectively. This is Dihydroxy-acid dehydratase from Phocaeicola vulgatus (strain ATCC 8482 / DSM 1447 / JCM 5826 / CCUG 4940 / NBRC 14291 / NCTC 11154) (Bacteroides vulgatus).